The following is a 141-amino-acid chain: Transcription antitermination protein NusB (141 aa).

It belongs to the NusB family.

Involved in transcription antitermination. Required for transcription of ribosomal RNA (rRNA) genes. Binds specifically to the boxA antiterminator sequence of the ribosomal RNA (rrn) operons. This Clostridium botulinum (strain Loch Maree / Type A3) protein is Transcription antitermination protein NusB.